Consider the following 202-residue polypeptide: Small ribosomal subunit protein uS4c (202 aa).

The 64-residue stretch at 90–153 folds into the S4 RNA-binding domain; it reads MRLDNVIFRL…KSETIISKNI (64 aa).

This sequence belongs to the universal ribosomal protein uS4 family. As to quaternary structure, part of the 30S ribosomal subunit. Contacts protein S5. The interaction surface between S4 and S5 is involved in control of translational fidelity.

It is found in the plastid. The protein localises to the chloroplast. One of the primary rRNA binding proteins, it binds directly to 16S rRNA where it nucleates assembly of the body of the 30S subunit. Functionally, with S5 and S12 plays an important role in translational accuracy. This Sphaerocarpos donnelli (Liverwort) protein is Small ribosomal subunit protein uS4c (rps4).